We begin with the raw amino-acid sequence, 250 residues long: Eukaryotic translation initiation factor 3 subunit K (250 aa).

In terms of domain architecture, PCI spans 54-235 (YDLFGNLAIL…DVKAGVVKEN (182 aa)).

Belongs to the eIF-3 subunit K family. Component of the eukaryotic translation initiation factor 3 (eIF-3) complex.

Its subcellular location is the cytoplasm. In terms of biological role, component of the eukaryotic translation initiation factor 3 (eIF-3) complex, which is involved in protein synthesis of a specialized repertoire of mRNAs and, together with other initiation factors, stimulates binding of mRNA and methionyl-tRNAi to the 40S ribosome. The eIF-3 complex specifically targets and initiates translation of a subset of mRNAs involved in cell proliferation. The sequence is that of Eukaryotic translation initiation factor 3 subunit K from Cryptococcus neoformans var. neoformans serotype D (strain B-3501A) (Filobasidiella neoformans).